The chain runs to 161 residues: ATP synthase subunit b 1 (161 aa).

The chain crosses the membrane as a helical span at residues Glu-6–His-26.

The protein belongs to the ATPase B chain family. In terms of assembly, F-type ATPases have 2 components, F(1) - the catalytic core - and F(0) - the membrane proton channel. F(1) has five subunits: alpha(3), beta(3), gamma(1), delta(1), epsilon(1). F(0) has three main subunits: a(1), b(2) and c(10-14). The alpha and beta chains form an alternating ring which encloses part of the gamma chain. F(1) is attached to F(0) by a central stalk formed by the gamma and epsilon chains, while a peripheral stalk is formed by the delta and b chains.

It localises to the cell inner membrane. F(1)F(0) ATP synthase produces ATP from ADP in the presence of a proton or sodium gradient. F-type ATPases consist of two structural domains, F(1) containing the extramembraneous catalytic core and F(0) containing the membrane proton channel, linked together by a central stalk and a peripheral stalk. During catalysis, ATP synthesis in the catalytic domain of F(1) is coupled via a rotary mechanism of the central stalk subunits to proton translocation. Functionally, component of the F(0) channel, it forms part of the peripheral stalk, linking F(1) to F(0). The sequence is that of ATP synthase subunit b 1 from Beijerinckia indica subsp. indica (strain ATCC 9039 / DSM 1715 / NCIMB 8712).